We begin with the raw amino-acid sequence, 143 residues long: Large-conductance mechanosensitive channel (143 aa).

The next 2 membrane-spanning stretches (helical) occupy residues 10-30 (FAVK…GAFS) and 89-109 (GSFI…FLMV).

This sequence belongs to the MscL family. As to quaternary structure, homopentamer.

The protein localises to the cell inner membrane. Its function is as follows. Channel that opens in response to stretch forces in the membrane lipid bilayer. May participate in the regulation of osmotic pressure changes within the cell. The chain is Large-conductance mechanosensitive channel from Burkholderia ambifaria (strain ATCC BAA-244 / DSM 16087 / CCUG 44356 / LMG 19182 / AMMD) (Burkholderia cepacia (strain AMMD)).